The following is a 217-amino-acid chain: Large ribosomal subunit protein uL1 (217 aa).

Tyr-11 is modified (phosphotyrosine). 2 positions are modified to N6-acetyllysine: Lys-91 and Lys-106. Lys-118 carries the N6-acetyllysine; alternate modification. A Glycyl lysine isopeptide (Lys-Gly) (interchain with G-Cter in SUMO1); alternate cross-link involves residue Lys-118. Residue Lys-118 forms a Glycyl lysine isopeptide (Lys-Gly) (interchain with G-Cter in SUMO2); alternate linkage. Residue Lys-161 forms a Glycyl lysine isopeptide (Lys-Gly) (interchain with G-Cter in SUMO2) linkage.

Belongs to the universal ribosomal protein uL1 family. In terms of assembly, component of the large ribosomal subunit.

Its subcellular location is the cytoplasm. In terms of biological role, component of the large ribosomal subunit. The ribosome is a large ribonucleoprotein complex responsible for the synthesis of proteins in the cell. The sequence is that of Large ribosomal subunit protein uL1 (RPL10A) from Oryctolagus cuniculus (Rabbit).